Consider the following 428-residue polypeptide: Histidinol dehydrogenase (428 aa).

3 residues coordinate NAD(+): Tyr-127, Gln-185, and Asn-208. The substrate site is built by Ser-234, Gln-256, and His-259. Residues Gln-256 and His-259 each contribute to the Zn(2+) site. Catalysis depends on proton acceptor residues Glu-323 and His-324. Residues His-324, Asp-357, Glu-411, and His-416 each coordinate substrate. Asp-357 contacts Zn(2+). His-416 contributes to the Zn(2+) binding site.

Belongs to the histidinol dehydrogenase family. Zn(2+) is required as a cofactor.

It carries out the reaction L-histidinol + 2 NAD(+) + H2O = L-histidine + 2 NADH + 3 H(+). Its pathway is amino-acid biosynthesis; L-histidine biosynthesis; L-histidine from 5-phospho-alpha-D-ribose 1-diphosphate: step 9/9. Its function is as follows. Catalyzes the sequential NAD-dependent oxidations of L-histidinol to L-histidinaldehyde and then to L-histidine. This chain is Histidinol dehydrogenase, found in Mannheimia succiniciproducens (strain KCTC 0769BP / MBEL55E).